The sequence spans 349 residues: 1-acylglycerol-3-phosphate O-acyltransferase ABHD5 (349 aa).

Ala-2 carries the N-acetylalanine modification. The AB hydrolase-1 domain maps to 77-184 (PLVLLHGFGG…LVEPWGFPER (108 aa)). Phosphoserine is present on Ser-122. The HXXXXD motif motif lies at 327-332 (HYVYAD).

It belongs to the peptidase S33 family. ABHD4/ABHD5 subfamily. Interacts with ADRP, PLIN and PNPLA2. Interacts with PLIN5; promotes interaction with PNPLA2. In terms of tissue distribution, widely expressed in various tissues, including lymphocytes, liver, skeletal muscle and brain. Expressed by upper epidermal layers and dermal fibroblasts in skin, hepatocytes and neurons (at protein level).

The protein localises to the cytoplasm. It is found in the lipid droplet. Its subcellular location is the cytosol. It carries out the reaction a 1-acyl-sn-glycero-3-phosphate + an acyl-CoA = a 1,2-diacyl-sn-glycero-3-phosphate + CoA. It catalyses the reaction 1-(9Z-octadecenoyl)-sn-glycero-3-phosphate + hexadecanoyl-CoA = 1-(9Z)-octadecenoyl-2-hexadecanoyl-sn-glycero-3-phosphate + CoA. The catalysed reaction is 1-(9Z-octadecenoyl)-sn-glycero-3-phosphate + octadecanoyl-CoA = 1-(9Z-octadecenoyl)-2-octadecanoyl-sn-glycero-3-phosphate + CoA. The enzyme catalyses 1-(9Z-octadecenoyl)-sn-glycero-3-phosphate + (9Z)-octadecenoyl-CoA = 1,2-di-(9Z-octadecenoyl)-sn-glycero-3-phosphate + CoA. It carries out the reaction 1-(9Z-octadecenoyl)-sn-glycero-3-phosphate + (5Z,8Z,11Z,14Z)-eicosatetraenoyl-CoA = 1-(9Z)-octadecenoyl-2-(5Z,8Z,11Z,14Z)-eicosatetraenoyl-sn-glycero-3-phosphate + CoA. It catalyses the reaction eicosanoyl-CoA + 1-(9Z-octadecenoyl)-sn-glycero-3-phosphate = 1-(9Z)-octadecenoyl-2-eicosanoyl-sn-glycero-3-phosphate + CoA. The catalysed reaction is 1-hexadecanoyl-sn-glycero-3-phosphate + (9Z)-octadecenoyl-CoA = 1-hexadecanoyl-2-(9Z-octadecenoyl)-sn-glycero-3-phosphate + CoA. The enzyme catalyses 1-octadecanoyl-sn-glycero-3-phosphate + (9Z)-octadecenoyl-CoA = 1-octadecanoyl-2-(9Z-octadecenoyl)-sn-glycero-3-phosphate + CoA. It carries out the reaction 1-(5Z,8Z,11Z,14Z-eicosatetraenoyl)-sn-glycero-3-phosphate + (9Z)-octadecenoyl-CoA = 1-(5Z,8Z,11Z,14Z)-eicosatetraenoyl-2-(9Z)-octadecenoyl-sn-glycero-3-phosphate + CoA. Its activity is regulated as follows. Acyltransferase activity is inhibited by detergents such as Triton X-100 and 3-[(3-cholamidopropyl)dimethylammonio]-1-propanesulfonate (CHAPS). Acyltransferase activity is inhibited by the presence of magnesium and calcium. In terms of biological role, coenzyme A-dependent lysophosphatidic acid acyltransferase that catalyzes the transfer of an acyl group on a lysophosphatidic acid. Functions preferentially with 1-oleoyl-lysophosphatidic acid followed by 1-palmitoyl-lysophosphatidic acid, 1-stearoyl-lysophosphatidic acid and 1-arachidonoyl-lysophosphatidic acid as lipid acceptor. Functions preferentially with arachidonoyl-CoA followed by oleoyl-CoA as acyl group donors. Functions in phosphatidic acid biosynthesis. May regulate the cellular storage of triacylglycerol through activation of the phospholipase PNPLA2. Involved in keratinocyte differentiation. Regulates lipid droplet fusion. The polypeptide is 1-acylglycerol-3-phosphate O-acyltransferase ABHD5 (Homo sapiens (Human)).